A 720-amino-acid chain; its full sequence is MVDKLIHPWDLDLLVSGRQKDPHKLLGILASEDSSDHIVIFRPGAHTVAIELLGELHHAVAYRSGLFFLSVPKGIGHGDYRVYHQNGLLAHDPYAFPPLWGEIDSFLFHRGTHYRIYERMGAIPMEVQGISGVLFVLWAPHAQRVSVVGDFNFWHGLVNPLRKISDQGIWELFVPGLGEGIRYKWEIVTQSGNVIVKTDPYGKSFDPPPQGTARVADSESYSWSDHRWMERRSKQSEGPVTIYEVHLGSWQWQEGRPLSYSEMAHRLASYCKEMHYTHVELLPITEHPLNESWGYQVTGYYAPTSRYGTLQEFQYFVDYLHKENIGIILDWVPGHFPVDAFALASFDGEPLYEYTGHSQALHPHWNTFTFDYSRHEVTNFLLGSALFWLDKMHIDGLRVDAVASMLYRDYGREDGEWTPNIYGGKENLESIEFLKHLNSVIHKEFSGVLTFAEESTAFPGVTKDVDQGGLGFDYKWNLGWMHDTFHYFMKDPMYRKYHQKDLTFSLWYAFQESFILPLSHDEVVHGKGSLVNKLPGDTWTRFAQMRVLLSYQICLPGKKLLFMGGEFGQYGEWSPDRPLDWELLNHHYHKTLRNCVSALNALYIHQPYLWMQESSQECFHWVDFHDIENNVIAYYRFAGSNRSSALLCVHHFSASTFPSYVLRCEGVKHCELLLNTDDESFGGSGKGNRAPVVCQDQGVAWGLDIELPPLATVIYLVTFF.

Catalysis depends on D400, which acts as the Nucleophile. Residue E453 is the Proton donor of the active site.

Belongs to the glycosyl hydrolase 13 family. GlgB subfamily. As to quaternary structure, monomer.

It carries out the reaction Transfers a segment of a (1-&gt;4)-alpha-D-glucan chain to a primary hydroxy group in a similar glucan chain.. Its pathway is glycan biosynthesis; glycogen biosynthesis. Its function is as follows. Catalyzes the formation of the alpha-1,6-glucosidic linkages in glycogen by scission of a 1,4-alpha-linked oligosaccharide from growing alpha-1,4-glucan chains and the subsequent attachment of the oligosaccharide to the alpha-1,6 position. The chain is 1,4-alpha-glucan branching enzyme GlgB from Chlamydia pneumoniae (Chlamydophila pneumoniae).